The primary structure comprises 65 residues: Large ribosomal subunit protein uL29 (65 aa).

This sequence belongs to the universal ribosomal protein uL29 family.

This is Large ribosomal subunit protein uL29 from Lactobacillus acidophilus (strain ATCC 700396 / NCK56 / N2 / NCFM).